The primary structure comprises 662 residues: Forkhead box protein O1 (662 aa).

2 disordered regions span residues 1 to 62 (MAEA…PSAS) and 122 to 165 (GCLH…SRRN). The residue at position 24 (Thr24) is a Phosphothreonine; by PKB/AKT1 or PKB/AKT2 and SGK1. Over residues 33–62 (SQSNSATSSPAPSGGAAANPDAAAGLPSAS) the composition is skewed to low complexity. Residues 126–146 (PAPPQQPPPPGPLSQHPPVPP) show a composition bias toward pro residues. Residues 167–261 (WGNLSYADLI…KSGKSPRRRA (95 aa)) constitute a DNA-binding region (fork-head). DNA-binding regions lie at residues 218–225 (NSIRHNLS) and 241–244 (SSWW). Residue Ser219 is modified to Phosphoserine; by STK4/MST1. Phosphoserine is present on residues Ser225, Ser241, and Ser242. The segment at 241 to 342 (SSWWMLNPEG…GRLSPIMTEQ (102 aa)) is disordered. Lys252 and Lys255 each carry N6-acetyllysine. Ser256 bears the Phosphoserine; by CDK1 mark. Residues Arg258 and Arg260 each carry the omega-N-methylarginine; by PRMT1 modification. The Nuclear localization signal motif lies at 258 to 260 (RRR). At Ser263 the chain carries Phosphoserine; by PKB/AKT1 and SGK1. An N6-acetyllysine mark is found at Lys269, Lys272, and Lys281. Positions 271–282 (AKSRGRAAKKKA) are enriched in basic residues. Positions 290–570 (GAGDSPGSQF…RLTQEKTALQ (281 aa)) are sufficient for interaction with NLK. Residues Ser294 and Ser305 each carry the phosphoserine modification. The segment covering 316 to 333 (NWSTFRPRTSSNASTISG) has biased composition (polar residues). Position 326 is a phosphoserine; by PKB/AKT1 (Ser326). Ser329 is subject to Phosphoserine; by CK1 and SGK1. Ser332 is subject to Phosphoserine; by CK1. Ser336 carries the post-translational modification Phosphoserine; by DYRK1A. A Phosphothreonine modification is found at Thr340. A required for interaction with RUNX2 region spans residues 370–466 (SEISNPENME…GGMAQYNCAA (97 aa)). Lys430 bears the N6-acetyllysine mark. The Required for interaction with SIRT1 signature appears at 469 to 473 (LKELL).

In terms of assembly, interacts with LRPPRC. Interacts with RUNX2; the interaction inhibits RUNX2 transcriptional activity and mediates the IGF1/insulin-dependent BGLAP expression in osteoblasts Interacts with PPP2R1A; the interaction regulates the dephosphorylation of FOXO1 at Thr-24 and Ser-263 leading to its nuclear import. Interacts with NLK. Interacts with SIRT1; the interaction results in the deacetylation of FOXO1 leading to activation of FOXO1-mediated transcription of genes involved in DNA repair and stress resistance. Binds to CDK1. Interacts with the 14-3-3 proteins, YWHAG and YWHAZ; the interactions require insulin-stimulated phosphorylation on Thr-24, promote nuclear exit and loss of transcriptional activity. Interacts with SKP2; the interaction ubiquitinates FOXO1 leading to its proteasomal degradation. The interaction requires the presence of KRIT1. Interacts (via the C-terminal half) with ATF4 (via its DNA binding domain); the interaction occurs in osteoblasts, regulates glucose homeostasis via suppression of beta-cell proliferation and subsequent decrease in insulin production. Interacts with PRMT1; the interaction methylates FOXO1, prevents PKB/AKT1 phosphorylation and retains FOXO1 in the nucleus. Interacts with EP300 and CREBBP; the interactions acetylate FOXO1. Interacts with SIRT2; the interaction is disrupted in response to oxidative stress or serum deprivation, leading to increased level of acetylated FOXO1, which promotes stress-induced autophagy by stimulating E1-like activating enzyme ATG7. Interacts (acetylated form) with ATG7; the interaction is increased in response to oxidative stress or serum deprivation and promotes the autophagic process leading to cell death. Interacts (acetylated form) with PPARG. Interacts with XBP1; this interaction is direct and leads to FOXO1 ubiquitination and degradation via the proteasome pathway. Interacts (via the Fork-head domain) with CEBPA; the interaction increases when FOXO1 is deacetylated. Interacts with WDFY2. Forms a complex with WDFY2 and AKT1. Interacts with CRY1. Interacts with PPIA/CYPA; the interaction promotes FOXO1 dephosphorylation, nuclear accumulation and transcriptional activity. Interacts with TOX4; FOXO1 is required for full induction of TOX4-dependent activity and the interaction is inhibited by insulin. Interacts (when phosphorylated on Ser-263) with STUB1/CHIP. Post-translationally, phosphorylation by NLK promotes nuclear export and inhibits the transcriptional activity. In response to growth factors, phosphorylation on Thr-24, Ser-263 and Ser-326 by PKB/AKT1 promotes nuclear export and inactivation of transactivational activity. Phosphorylation on Thr-24 is required for binding 14-3-3 proteins. Phosphorylation of Ser-263 decreases DNA-binding activity and promotes the phosphorylation of Thr-24 and Ser-326, permitting phosphorylation of Ser-329 and Ser-332, probably by CDK1, leading to nuclear exclusion and loss of function. Stress signals, such as response to oxygen or nitric oxide, attenuate the PKB/AKT1-mediated phosphorylation leading to nuclear retention. Phosphorylation of Ser-336 is independent of IGF1 and leads to reduced function. Dephosphorylated on Thr-24 and Ser-263 by PP2A in beta-cells under oxidative stress leading to nuclear retention. Phosphorylation of Ser-256 by CDK1 disrupts binding of 14-3-3 proteins leading to nuclear accumulation and has no effect on DNA binding nor transcriptional activity. Phosphorylation by STK4/MST1 on Ser-219, upon oxidative stress, inhibits binding to 14-3-3 proteins and nuclear export. PPIA/CYPA promotes its dephosphorylation on Ser-263. Ubiquitinated by SKP2. Ubiquitination leads to proteasomal degradation. Ubiquitinated by STUB1/CHIP; when Ser-263 is phosphorylated. In terms of processing, methylation inhibits AKT1-mediated phosphorylation at Ser-263 and is increased by oxidative stress. Post-translationally, acetylated. Acetylation at Lys-269 and Lys-281 are necessary for autophagic cell death induction. Deacetylated by SIRT2 in response to oxidative stress or serum deprivation, thereby negatively regulating FOXO1-mediated autophagic cell death. Once in the nucleus, acetylated by CREBBP/EP300. Acetylation diminishes the interaction with target DNA and attenuates the transcriptional activity. It increases the phosphorylation at Ser-263. Deacetylation by SIRT1 results in reactivation of the transcriptional activity. Oxidative stress by hydrogen peroxide treatment appears to promote deacetylation and uncoupling of insulin-induced phosphorylation. By contrast, resveratrol acts independently of acetylation. Acetylated at Lys-430, promoting its localization to the nucleus and transcription factor activity. Deacetylation at Lys-430 by SIRT6, promotes its translocation into the cytoplasm, preventing its transcription factor activity. Deacetylation and subsequent inhibition by SIRT6 has different effects depending on cell types: it inhibits gluconeogenesis in hepatocytes, promotes glucose sensing in pancreatic beta-cells and regulates lipid catabolism in brown adipocytes. Highly in subcutaneous adipose and visceral adipose tissues. Levels higher in piglets than in adults. Also expressed at lower levels in liver and muscle.

It localises to the cytoplasm. Its subcellular location is the nucleus. Functionally, transcription factor that is the main target of insulin signaling and regulates metabolic homeostasis in response to oxidative stress. Binds to the insulin response element (IRE) with consensus sequence 5'-TT[G/A]TTTTG-3' and the related Daf-16 family binding element (DBE) with consensus sequence 5'-TT[G/A]TTTAC-3'. Activity suppressed by insulin. Main regulator of redox balance and osteoblast numbers and controls bone mass. Orchestrates the endocrine function of the skeleton in regulating glucose metabolism. Also acts as a key regulator of chondrogenic commitment of skeletal progenitor cells in response to lipid availability: when lipids levels are low, translocates to the nucleus and promotes expression of SOX9, which induces chondrogenic commitment and suppresses fatty acid oxidation. Acts synergistically with ATF4 to suppress osteocalcin/BGLAP activity, increasing glucose levels and triggering glucose intolerance and insulin insensitivity. Also suppresses the transcriptional activity of RUNX2, an upstream activator of osteocalcin/BGLAP. Acts as an inhibitor of glucose sensing in pancreatic beta cells by acting as a transcription repressor and suppressing expression of PDX1. In hepatocytes, promotes gluconeogenesis by acting together with PPARGC1A and CEBPA to activate the expression of genes such as IGFBP1, G6PC1 and PCK1. Also promotes gluconeogenesis by directly promoting expression of PPARGC1A and G6PC1. Important regulator of cell death acting downstream of CDK1, PKB/AKT1 and STK4/MST1. Promotes neural cell death. Mediates insulin action on adipose tissue. Regulates the expression of adipogenic genes such as PPARG during preadipocyte differentiation and, adipocyte size and adipose tissue-specific gene expression in response to excessive calorie intake. Regulates the transcriptional activity of GADD45A and repair of nitric oxide-damaged DNA in beta-cells. Required for the autophagic cell death induction in response to starvation or oxidative stress in a transcription-independent manner. Mediates the function of MLIP in cardiomyocytes hypertrophy and cardiac remodeling. Positive regulator of apoptosis in cardiac smooth muscle cells as a result of its transcriptional activation of pro-apoptotic genes. Regulates endothelial cell (EC) viability and apoptosis in a PPIA/CYPA-dependent manner via transcription of CCL2 and BCL2L11 which are involved in EC chemotaxis and apoptosis. This is Forkhead box protein O1 (FOXO1) from Sus scrofa (Pig).